A 134-amino-acid polypeptide reads, in one-letter code: Outer membrane lipoprotein RcsF (134 aa).

Positions 1 to 15 are cleaved as a signal peptide; sequence MRALPICLVALMLSG. A lipid anchor (N-palmitoyl cysteine) is attached at C16. C16 is lipidated: S-diacylglycerol cysteine. 2 disordered regions span residues 22-48 and 67-88; these read SPVE…RATP and GEVS…IPTA. Polar residues predominate over residues 72–82; sequence DSCQASNQDSP. 2 cysteine pairs are disulfide-bonded: C74-C118 and C109-C124.

The protein belongs to the RcsF family.

It localises to the cell outer membrane. Its function is as follows. Essential component of the Rcs signaling system, which controls transcription of numerous genes. Plays a role in signal transduction from the cell surface to the histidine kinase RcsC. May detect outer membrane defects. The protein is Outer membrane lipoprotein RcsF of Escherichia coli O6:H1 (strain CFT073 / ATCC 700928 / UPEC).